The sequence spans 92 residues: Evasin P675 (92 aa).

The first 24 residues, 1 to 24 (MEVKTFAFLQIAVIIALGLHLAPA), serve as a signal peptide directing secretion. Disulfide bonds link cysteine 44-cysteine 63, cysteine 48-cysteine 65, and cysteine 59-cysteine 76. Asparagine 47 is a glycosylation site (N-linked (GlcNAc...) asparagine). N-linked (GlcNAc...) asparagine glycosylation occurs at asparagine 70.

Its subcellular location is the secreted. Salivary chemokine-binding protein which binds to host chemokines CXCL1, CXCL2, CXCL3, CXCL4, CXCL5, CXCL6, CXCL10, CXCL11 and CXCL13. The polypeptide is Evasin P675 (Ixodes ricinus (Common tick)).